The following is a 57-amino-acid chain: Large ribosomal subunit protein bL32 (57 aa).

Positions Met-1 to His-22 are disordered.

It belongs to the bacterial ribosomal protein bL32 family.

The sequence is that of Large ribosomal subunit protein bL32 from Nostoc punctiforme (strain ATCC 29133 / PCC 73102).